Consider the following 122-residue polypeptide: MIQTQSMLDVADNSGARRVMCIKVLGGSHRRYAGIGDIIKVTVKEAIPRGKVKKGQVMTAVVVRTRHGVRRADGSIIRFDGNAAVLLNNKQEPIGTRIFGPVTRELRSEKFMKIVSLAPEVL.

It belongs to the universal ribosomal protein uL14 family. As to quaternary structure, part of the 50S ribosomal subunit. Forms a cluster with proteins L3 and L19. In the 70S ribosome, L14 and L19 interact and together make contacts with the 16S rRNA in bridges B5 and B8.

Its function is as follows. Binds to 23S rRNA. Forms part of two intersubunit bridges in the 70S ribosome. The sequence is that of Large ribosomal subunit protein uL14 from Ectopseudomonas mendocina (strain ymp) (Pseudomonas mendocina).